Consider the following 2348-residue polypeptide: Transcription factor HIVEP3 (2348 aa).

The disordered stretch occupies residues 1–105; the sequence is MDPDQSIKGT…AFMSPGKPEH (105 aa). Polar residues predominate over residues 27-72; the sequence is IQTSVSSSAPYPGSGTTAPSESATQELLATQPFSGPSQEKTGQQQK. 2 consecutive C2H2-type zinc fingers follow at residues 185–207 and 213–235; these read YICQ…IRSH and YPCG…RKSH. The tract at residues 185–235 is ZAS1; sequence YICQYCSRPCAKPSVLQKHIRSHTGERPYPCGPCGFSFKTKSNLYKHRKSH. The interval 204–1055 is no DNA binding activity or transactivation activity, but complete prevention of TRAF-dependent NF-Kappa-B activation; associates with TRAF2 and JUN; it reads IRSHTGERPY…KGKQESSEEP (852 aa). Disordered regions lie at residues 239 to 401, 475 to 532, and 561 to 628; these read IKAG…SPPN, DSVK…PLLR, and ADPE…TKKG. The segment at 257-280 is acidic 1; the sequence is EMERIPGEEFEEPTEGESTDSEEE. Positions 264-281 are enriched in acidic residues; sequence EEFEEPTEGESTDSEEET. Low complexity predominate over residues 298 to 323; that stretch reads PLLSSSLYSSGSHGSSQERCSLSQSS. Residues 338–352 are compositionally biased toward basic and acidic residues; it reads SSEHPLSHKPEDTHT. Polar residues-rich tracts occupy residues 372–401 and 485–495; these read TFLS…SPPN and TRRSSVESPKS. Composition is skewed to low complexity over residues 513-527 and 589-605; these read QSLL…STHP and PLGG…SSKD. The segment covering 606–623 has biased composition (basic and acidic residues); the sequence is PTSKPSDEPEPKESDLTK. The CCHC HIVEP-type zinc finger occupies 633–663; it reads GANYECTICGARYKKRDNYEAHKKYYCSELQ. 5 disordered regions span residues 692-1098, 1229-1274, 1386-1427, 1441-1555, and 1654-1694; these read KLGA…PPYT, LPPV…TSAP, EGCS…KADE, STED…EGTD, and EVHL…GEPA. Residues 736-749 are compositionally biased toward low complexity; it reads STKSPAEASKSAPS. An acidic 2 region spans residues 844-865; it reads EEPDRPDTEPEPPPKEPEKTEE. Residues 845–865 are compositionally biased toward basic and acidic residues; sequence EPDRPDTEPEPPPKEPEKTEE. The Nuclear localization signal motif lies at 885–891; the sequence is PKKKRLR. The span at 893 to 929 shows a compositional bias: low complexity; it reads AEMAQSSGESSFESSVPLSRSPSQESSISLSGSSRSA. The span at 930 to 939 shows a compositional bias: basic and acidic residues; the sequence is SFDREDHGKA. 3 stretches are compositionally biased toward polar residues: residues 975–985, 1062–1073, and 1247–1256; these read SEQSPNVPHSS, TKSSVPQISVGT, and SSSTEYSSDI. The stretch at 1409–1433 forms a coiled coil; it reads METQQQKRVKEEEASKADEKLELVS. Composition is skewed to basic and acidic residues over residues 1416–1427, 1442–1452, and 1518–1527; these read RVKEEEASKADE, TEDRKKTEKPH, and VKKEDPKEQT. The span at 1538-1547 shows a compositional bias: low complexity; that stretch reads LPLSDTSPKP. Residues 1665 to 1694 are compositionally biased toward basic and acidic residues; the sequence is SQKDPARVEKEEKQGKAEEGTPTSKRGEPA. C2H2-type zinc fingers lie at residues 1720-1742 and 1748-1772; these read YVCE…IRTH and YVCK…SKAH. Residues 1720-1772 form a ZAS2 region; it reads YVCEECGIRCKKPSMLKKHIRTHTDVRPYVCKHCHFAFKTKGNLTKHMKSKAH. Positions 1783 to 1841 are acidic 3; that stretch reads EELEAEEGTSDDLHQDSEGQEGAEAVEEHQFSDLEDSDSDSDLDEDEEEEEEEEESQDE. 2 disordered regions span residues 1786–1990 and 2009–2038; these read EAEE…HLCG and PAGL…ESPP. The span at 1815-1840 shows a compositional bias: acidic residues; sequence DLEDSDSDSDLDEDEEEEEEEEESQD. Polar residues predominate over residues 1871 to 1902; that stretch reads PDSTSDEVPQGSSISEATHLTASSCSTPSRGT. Tandem repeats lie at residues 1897 to 1900, 1927 to 1930, 1933 to 1936, 1961 to 1964, and 2024 to 2027. A compositionally biased stretch (polar residues) spans 1952-1961; the sequence is KNDSSPQQCS. Residues 2053-2148 are 5 X 4 AA tandem repeats of [ST]-P-X-[RK]; that stretch reads SPSADKSGLG…QLLSRAPCPL (96 aa). 2 disordered regions span residues 2184-2265 and 2284-2348; these read SDLT…QGHQ and KASS…PPSI. A compositionally biased stretch (low complexity) spans 2203–2216; the sequence is SPSASVSPVAKVSK. The segment covering 2293-2314 has biased composition (polar residues); sequence RSSSMDCLAETSTYSPPRSRNL.

Interacts with TRAF1 and TRAF2 as well as with JUN. Forms a multimeric complex with RUNX2 and E3 ubiquitin ligase WWP1. Phosphorylated on threonine and serine residues. Phosphorylation by cyclin-dependent kinase CDK1 decreases HIVEP3 DNA binding affinity, and by epidermal growth factor receptor kinase increases its DNA binding affinity. As to expression, expressed in macrophages, lymphocytes, brain, thymus, spleen and bone marrow. Expressed in osteoblasts, whole bone and, to a lesser extent, in osteoclasts.

The protein resides in the cytoplasm. It is found in the nucleus. In terms of biological role, plays a role of transcription factor; binds to recognition signal sequences (Rss heptamer) for somatic recombination of immunoglobulin and T-cell receptor gene segments; Also binds to the kappa-B motif of gene such as S100A4, involved in cell progression and differentiation. Kappa-B motif is a gene regulatory element found in promoters and enhancers of genes involved in immunity, inflammation, and growth and that responds to viral antigens, mitogens, and cytokines. Involvement of HIVEP3 in cell growth is strengthened by the fact that its down-regulation promotes cell cycle progression with ultimate formation of multinucleated giant cells. Strongly inhibits TNF-alpha-induced NF-kappa-B activation; Interferes with nuclear factor NF-kappa-B by several mechanisms: as transcription factor, by competing for Kappa-B motif and by repressing transcription in the nucleus; through a non transcriptional process, by inhibiting nuclear translocation of RELA by association with TRAF2, an adapter molecule in the tumor necrosis factor signaling, which blocks the formation of IKK complex. Interaction with TRAF proteins inhibits both NF-Kappa-B-mediated and c-Jun N-terminal kinase/JNK-mediated responses that include apoptosis and pro-inflammatory cytokine gene expression. Positively regulates the expression of IL2 in T-cell. Essential regulator of adult bone formation. The chain is Transcription factor HIVEP3 (Hivep3) from Mus musculus (Mouse).